The following is a 155-amino-acid chain: 6,7-dimethyl-8-ribityllumazine synthase (155 aa).

5-amino-6-(D-ribitylamino)uracil contacts are provided by residues Phe23, 57–59 (AFE), and 83–85 (AVI). 88-89 (AT) provides a ligand contact to (2S)-2-hydroxy-3-oxobutyl phosphate. Residue His91 is the Proton donor of the active site. Phe114 lines the 5-amino-6-(D-ribitylamino)uracil pocket. Arg128 provides a ligand contact to (2S)-2-hydroxy-3-oxobutyl phosphate.

Belongs to the DMRL synthase family.

The catalysed reaction is (2S)-2-hydroxy-3-oxobutyl phosphate + 5-amino-6-(D-ribitylamino)uracil = 6,7-dimethyl-8-(1-D-ribityl)lumazine + phosphate + 2 H2O + H(+). It functions in the pathway cofactor biosynthesis; riboflavin biosynthesis; riboflavin from 2-hydroxy-3-oxobutyl phosphate and 5-amino-6-(D-ribitylamino)uracil: step 1/2. Its function is as follows. Catalyzes the formation of 6,7-dimethyl-8-ribityllumazine by condensation of 5-amino-6-(D-ribitylamino)uracil with 3,4-dihydroxy-2-butanone 4-phosphate. This is the penultimate step in the biosynthesis of riboflavin. The chain is 6,7-dimethyl-8-ribityllumazine synthase from Leptospira biflexa serovar Patoc (strain Patoc 1 / Ames).